Here is a 221-residue protein sequence, read N- to C-terminus: Octanoyltransferase (221 aa).

A BPL/LPL catalytic domain is found at 36 to 221 (KKEDNQLFFC…LRSIFMEIFA (186 aa)). Residues 81–88 (RGGDITYH), 154–156 (AIG), and 167–169 (GFA) contribute to the substrate site. Residue Cys-185 is the Acyl-thioester intermediate of the active site.

It belongs to the LipB family.

It is found in the cytoplasm. It carries out the reaction octanoyl-[ACP] + L-lysyl-[protein] = N(6)-octanoyl-L-lysyl-[protein] + holo-[ACP] + H(+). Its pathway is protein modification; protein lipoylation via endogenous pathway; protein N(6)-(lipoyl)lysine from octanoyl-[acyl-carrier-protein]: step 1/2. Its function is as follows. Catalyzes the transfer of endogenously produced octanoic acid from octanoyl-acyl-carrier-protein onto the lipoyl domains of lipoate-dependent enzymes. Lipoyl-ACP can also act as a substrate although octanoyl-ACP is likely to be the physiological substrate. This chain is Octanoyltransferase, found in Parabacteroides distasonis (strain ATCC 8503 / DSM 20701 / CIP 104284 / JCM 5825 / NCTC 11152).